A 60-amino-acid polypeptide reads, in one-letter code: Sperm protamine P1 (60 aa).

The segment at 1 to 60 is disordered; that stretch reads MARYRHSRSRSRSRYRRRRRRRSRYRSQRRRYRGRRRRRSRRGRRRGYSRRRYSRRRRRY.

It belongs to the protamine P1 family. Testis.

The protein resides in the nucleus. Its subcellular location is the chromosome. Its function is as follows. Protamines substitute for histones in the chromatin of sperm during the haploid phase of spermatogenesis. They compact sperm DNA into a highly condensed, stable and inactive complex. This chain is Sperm protamine P1 (PRM1), found in Osphranter rufus (Red kangaroo).